The sequence spans 133 residues: Small ribosomal subunit protein uS8 (133 aa).

This sequence belongs to the universal ribosomal protein uS8 family. Part of the 30S ribosomal subunit. Contacts proteins S5 and S12.

Its function is as follows. One of the primary rRNA binding proteins, it binds directly to 16S rRNA central domain where it helps coordinate assembly of the platform of the 30S subunit. The protein is Small ribosomal subunit protein uS8 of Microcystis aeruginosa (strain NIES-843 / IAM M-2473).